Consider the following 249-residue polypeptide: Uridylate kinase (249 aa).

Residue 21-24 (KLSG) participates in ATP binding. G63 contributes to the UMP binding site. ATP contacts are provided by G64 and R68. UMP-binding positions include D84 and 145–152 (TGNPFVTT). ATP is bound by residues T172, Y178, and D181.

It belongs to the UMP kinase family. In terms of assembly, homohexamer.

It is found in the cytoplasm. It carries out the reaction UMP + ATP = UDP + ADP. It participates in pyrimidine metabolism; CTP biosynthesis via de novo pathway; UDP from UMP (UMPK route): step 1/1. Its activity is regulated as follows. Inhibited by UTP. In terms of biological role, catalyzes the reversible phosphorylation of UMP to UDP. The sequence is that of Uridylate kinase from Francisella tularensis subsp. tularensis (strain FSC 198).